The primary structure comprises 130 residues: Ribosome biogenesis inhibitor MINAS-60 (130 aa).

A disordered region spans residues 61-130 (SRVRRIPTRP…RRRRPVTSSC (70 aa)). Over residues 109-130 (KGRRRRRRRMRRRRRRPVTSSC) the composition is skewed to basic residues.

In terms of assembly, interacts with 60S ribosome assembly factors GTPBP4 and MRTO4.

Its subcellular location is the nucleus. It localises to the nucleolus. Its function is as follows. Acts as a late-stage inhibitor of pre-60S ribosome assembly by preventing pre-60S ribosome export from nucleus. The sequence is that of Ribosome biogenesis inhibitor MINAS-60 from Homo sapiens (Human).